Consider the following 211-residue polypeptide: FMN-dependent NADH:quinone oxidoreductase 2 (211 aa).

FMN contacts are provided by residues Ser10 and 17–19; that span reads SRS.

Belongs to the azoreductase type 1 family. As to quaternary structure, homodimer. The cofactor is FMN.

It catalyses the reaction 2 a quinone + NADH + H(+) = 2 a 1,4-benzosemiquinone + NAD(+). The catalysed reaction is N,N-dimethyl-1,4-phenylenediamine + anthranilate + 2 NAD(+) = 2-(4-dimethylaminophenyl)diazenylbenzoate + 2 NADH + 2 H(+). In terms of biological role, quinone reductase that provides resistance to thiol-specific stress caused by electrophilic quinones. Its function is as follows. Also exhibits azoreductase activity. Catalyzes the reductive cleavage of the azo bond in aromatic azo compounds to the corresponding amines. This Listeria monocytogenes serotype 4b (strain F2365) protein is FMN-dependent NADH:quinone oxidoreductase 2.